A 212-amino-acid chain; its full sequence is Probable nicotinate-nucleotide adenylyltransferase (212 aa).

Belongs to the NadD family.

It catalyses the reaction nicotinate beta-D-ribonucleotide + ATP + H(+) = deamido-NAD(+) + diphosphate. It functions in the pathway cofactor biosynthesis; NAD(+) biosynthesis; deamido-NAD(+) from nicotinate D-ribonucleotide: step 1/1. Its function is as follows. Catalyzes the reversible adenylation of nicotinate mononucleotide (NaMN) to nicotinic acid adenine dinucleotide (NaAD). The polypeptide is Probable nicotinate-nucleotide adenylyltransferase (Saccharopolyspora erythraea (strain ATCC 11635 / DSM 40517 / JCM 4748 / NBRC 13426 / NCIMB 8594 / NRRL 2338)).